Reading from the N-terminus, the 155-residue chain is Ribosome maturation factor RimP (155 aa).

This sequence belongs to the RimP family.

The protein localises to the cytoplasm. Its function is as follows. Required for maturation of 30S ribosomal subunits. This is Ribosome maturation factor RimP from Prochlorococcus marinus (strain MIT 9515).